A 1068-amino-acid polypeptide reads, in one-letter code: Carbamoyl phosphate synthase large chain (1068 aa).

The segment at 1–403 (MPKRTDINTI…SLQKALRGLE (403 aa)) is carboxyphosphate synthetic domain. Residues arginine 129, arginine 169, glycine 175, glycine 176, glutamine 208, valine 210, glutamate 215, glycine 241, valine 242, histidine 243, glutamine 285, and glutamate 299 each coordinate ATP. The 196-residue stretch at 133–328 (KEAMEKIGLS…IAKVAAKLAV (196 aa)) folds into the ATP-grasp 1 domain. Positions 285, 299, and 301 each coordinate Mg(2+). 3 residues coordinate Mn(2+): glutamine 285, glutamate 299, and asparagine 301. Positions 404–548 (TGICGFNLMS…YSTYEEECES (145 aa)) are oligomerization domain. The segment at 549–930 (RPSDKKKIMI…AFLKAQLGAN (382 aa)) is carbamoyl phosphate synthetic domain. Residues 673–864 (QQILHKLHLK…LAKIAARVMA (192 aa)) enclose the ATP-grasp 2 domain. Residues arginine 709, histidine 748, leucine 750, glutamate 755, glycine 780, isoleucine 781, histidine 782, serine 783, glutamine 823, and glutamate 835 each coordinate ATP. Residues glutamine 823, glutamate 835, and asparagine 837 each contribute to the Mg(2+) site. 3 residues coordinate Mn(2+): glutamine 823, glutamate 835, and asparagine 837. Residues 931-1068 (ERIPKTGKVF…SLQDLHQRLL (138 aa)) form the MGS-like domain. The interval 931 to 1068 (ERIPKTGKVF…SLQDLHQRLL (138 aa)) is allosteric domain.

The protein belongs to the CarB family. As to quaternary structure, composed of two chains; the small (or glutamine) chain promotes the hydrolysis of glutamine to ammonia, which is used by the large (or ammonia) chain to synthesize carbamoyl phosphate. Tetramer of heterodimers (alpha,beta)4. Requires Mg(2+) as cofactor. The cofactor is Mn(2+).

The enzyme catalyses hydrogencarbonate + L-glutamine + 2 ATP + H2O = carbamoyl phosphate + L-glutamate + 2 ADP + phosphate + 2 H(+). The catalysed reaction is hydrogencarbonate + NH4(+) + 2 ATP = carbamoyl phosphate + 2 ADP + phosphate + 2 H(+). It participates in amino-acid biosynthesis; L-arginine biosynthesis; carbamoyl phosphate from bicarbonate: step 1/1. It functions in the pathway pyrimidine metabolism; UMP biosynthesis via de novo pathway; (S)-dihydroorotate from bicarbonate: step 1/3. Functionally, large subunit of the glutamine-dependent carbamoyl phosphate synthetase (CPSase). CPSase catalyzes the formation of carbamoyl phosphate from the ammonia moiety of glutamine, carbonate, and phosphate donated by ATP, constituting the first step of 2 biosynthetic pathways, one leading to arginine and/or urea and the other to pyrimidine nucleotides. The large subunit (synthetase) binds the substrates ammonia (free or transferred from glutamine from the small subunit), hydrogencarbonate and ATP and carries out an ATP-coupled ligase reaction, activating hydrogencarbonate by forming carboxy phosphate which reacts with ammonia to form carbamoyl phosphate. This chain is Carbamoyl phosphate synthase large chain, found in Pasteurella multocida (strain Pm70).